We begin with the raw amino-acid sequence, 198 residues long: HTH-type transcriptional regulator BetI (198 aa).

The HTH tetR-type domain occupies 8–68 (PIRRQQLIEA…ATMRYLIRHL (61 aa)). Positions 31–50 (SIAQIAKRAGVSNGIISHYF) form a DNA-binding region, H-T-H motif.

Its pathway is amine and polyamine biosynthesis; betaine biosynthesis via choline pathway [regulation]. Its function is as follows. Repressor involved in the biosynthesis of the osmoprotectant glycine betaine. It represses transcription of the choline transporter BetT and the genes of BetAB involved in the synthesis of glycine betaine. The sequence is that of HTH-type transcriptional regulator BetI from Yersinia pseudotuberculosis serotype O:1b (strain IP 31758).